A 383-amino-acid polypeptide reads, in one-letter code: Dynein axonemal assembly factor 11 (383 aa).

4 LRR repeats span residues 20-45, 46-66, 67-89, and 90-110; these read LSNLKEVALHQQDIERIELIGDACRE, LEILYLCNNYISRIEGLQHLK, YLKYLNLAVNNITYIEGLEGCEA, and LERLDLTLNFVADVTCVERLR. Positions 128-146 constitute an LRRCT domain; sequence VAGYRAYVVHALPQLRELD. The segment at 201–244 is disordered; it reads KGERLYGHTPEERLQMLREKEEEERRKREEQRERERSSQFGAIR. Residues 211–239 are a coiled coil; sequence EERLQMLREKEEEERRKREEQRERERSSQ.

It belongs to the tilB family.

The protein resides in the cytoplasm. Its subcellular location is the cytoskeleton. It localises to the flagellum basal body. Its function is as follows. Involved in the regulation of the cell cycle; is required for the basal body replication and new flagellum biogenesis. This Trypanosoma brucei brucei protein is Dynein axonemal assembly factor 11 (dnaaf11).